A 113-amino-acid chain; its full sequence is Hydrogenase maturation factor HypA 1 (113 aa).

His-2 provides a ligand contact to Ni(2+). Zn(2+)-binding residues include Cys-73, Cys-76, Cys-89, and Cys-92.

Belongs to the HypA/HybF family.

Involved in the maturation of [NiFe] hydrogenases. Required for nickel insertion into the metal center of the hydrogenase. This is Hydrogenase maturation factor HypA 1 from Bradyrhizobium diazoefficiens (strain JCM 10833 / BCRC 13528 / IAM 13628 / NBRC 14792 / USDA 110).